Consider the following 66-residue polypeptide: UPF0337 protein SpyM3_0896 (66 aa).

This sequence belongs to the UPF0337 (CsbD) family.

The protein is UPF0337 protein SpyM3_0896 of Streptococcus pyogenes serotype M3 (strain ATCC BAA-595 / MGAS315).